A 95-amino-acid polypeptide reads, in one-letter code: Opiscorpine-1 (95 aa).

Residues 1–19 (MNNKLTALIFLGLLAIASC) form the signal peptide. In terms of domain architecture, BetaSPN-type CS-alpha/beta spans 55–95 (EFMCVANVDMTKSCDTHCQKASGEKGYCHGTKCKCGVPLSY). 3 disulfides stabilise this stretch: C58–C82, C68–C87, and C72–C89.

It belongs to the long chain scorpion toxin family. Class 3 subfamily. As to expression, expressed by the venom gland.

It is found in the secreted. Functionally, the short synthetic peptide (20-54) has antimicrobial activity against the yeasts F.culmorum (IC(50)=8.8 uM) and F.oxysporum (IC(50)=10 uM), and the Gram-negative bacteria E.coli. The sequence is that of Opiscorpine-1 from Opistophthalmus carinatus (African yellow leg scorpion).